The following is a 223-amino-acid chain: MKTCAIIPVSRFTHAKTRLSPTLSPSEREGLLKAMLMDVSGALARHVDRVLVISADEDVLEYAYSLGLKILEEEGERDLNGALEQAMDFCAPEFDRVIITPSDIPLIGKADVSNLLDHASRADVVIAPANGGGTNTLILRPSAMSLRFGDCSFFEHIHEARERGLSVSVYDSFYLSLDVNTAEDLGEIILHGEGTHAREYLRKLRFTVKPSRGSDRLEVSRSP.

The protein belongs to the CofC family. In terms of assembly, homodimer.

The catalysed reaction is (2S)-2-phospholactate + GTP + H(+) = (2S)-lactyl-2-diphospho-5'-guanosine + diphosphate. Its pathway is cofactor biosynthesis; coenzyme F420 biosynthesis. Its function is as follows. Guanylyltransferase that catalyzes the activation of (2S)-2-phospholactate (2-PL) as (2S)-lactyl-2-diphospho-5'-guanosine, via the condensation of 2-PL with GTP. It is involved in the biosynthesis of coenzyme F420, a hydride carrier cofactor. This chain is 2-phospho-L-lactate guanylyltransferase, found in Methanothermobacter thermautotrophicus (strain ATCC 29096 / DSM 1053 / JCM 10044 / NBRC 100330 / Delta H) (Methanobacterium thermoautotrophicum).